The sequence spans 693 residues: Elongation factor G (693 aa).

One can recognise a tr-type G domain in the interval 8–282; the sequence is EKTRNIGIMA…AVLDYLPSPL (275 aa). Residues 17–24, 81–85, and 135–138 contribute to the GTP site; these read AHVDAGKT, DTPGH, and NKMD.

This sequence belongs to the TRAFAC class translation factor GTPase superfamily. Classic translation factor GTPase family. EF-G/EF-2 subfamily.

The protein localises to the cytoplasm. Its function is as follows. Catalyzes the GTP-dependent ribosomal translocation step during translation elongation. During this step, the ribosome changes from the pre-translocational (PRE) to the post-translocational (POST) state as the newly formed A-site-bound peptidyl-tRNA and P-site-bound deacylated tRNA move to the P and E sites, respectively. Catalyzes the coordinated movement of the two tRNA molecules, the mRNA and conformational changes in the ribosome. The sequence is that of Elongation factor G from Enterococcus faecalis (strain ATCC 700802 / V583).